We begin with the raw amino-acid sequence, 155 residues long: Transcriptional repressor NrdR (155 aa).

The segment at 3–34 (CPYCGHLEDRVVDSRETQDGQATRRRRACLSC) is a zinc-finger region. Positions 49 to 139 (PQVVKKDGRR…VYRAFRDVGE (91 aa)) constitute an ATP-cone domain.

This sequence belongs to the NrdR family. Requires Zn(2+) as cofactor.

In terms of biological role, negatively regulates transcription of bacterial ribonucleotide reductase nrd genes and operons by binding to NrdR-boxes. The polypeptide is Transcriptional repressor NrdR (Anaeromyxobacter sp. (strain K)).